Reading from the N-terminus, the 145-residue chain is Large ribosomal subunit protein bL19 (145 aa).

Positions 114–136 (IAEKMESPAAKATREAAKKEAKA) are enriched in basic and acidic residues. The disordered stretch occupies residues 114–145 (IAEKMESPAAKATREAAKKEAKAAKKNAAPAE).

The protein belongs to the bacterial ribosomal protein bL19 family.

This protein is located at the 30S-50S ribosomal subunit interface and may play a role in the structure and function of the aminoacyl-tRNA binding site. This chain is Large ribosomal subunit protein bL19, found in Methylocella silvestris (strain DSM 15510 / CIP 108128 / LMG 27833 / NCIMB 13906 / BL2).